The primary structure comprises 339 residues: Dihydroorotate dehydrogenase (quinone) (339 aa).

FMN-binding positions include 62-66 and Thr86; that span reads AGMDK. Substrate is bound at residue Lys66. 111–115 is a substrate binding site; the sequence is NRMGF. Residues Asn139 and Asn172 each coordinate FMN. Asn172 contributes to the substrate binding site. Ser175 functions as the Nucleophile in the catalytic mechanism. Asn177 is a substrate binding site. FMN-binding residues include Lys217 and Thr245. 246–247 is a substrate binding site; sequence NT. FMN is bound by residues Gly268, Gly297, and 318–319; that span reads FS.

It belongs to the dihydroorotate dehydrogenase family. Type 2 subfamily. In terms of assembly, monomer. The cofactor is FMN.

Its subcellular location is the cell membrane. The catalysed reaction is (S)-dihydroorotate + a quinone = orotate + a quinol. It participates in pyrimidine metabolism; UMP biosynthesis via de novo pathway; orotate from (S)-dihydroorotate (quinone route): step 1/1. Catalyzes the conversion of dihydroorotate to orotate with quinone as electron acceptor. In Shewanella halifaxensis (strain HAW-EB4), this protein is Dihydroorotate dehydrogenase (quinone).